A 940-amino-acid chain; its full sequence is MALSSLVEFVILVVKNPCYQQDDASSSIQEISISASEIASWDMSEILSYGSVKVRAHRTRLIQESSYFHGLLSGSFSESGLDHISVEWNLESFLNLLMCLYGYDIEITSSSFLPLFESALYFGVEKLLSICKNWLSVLASSNDNALPKVELSDLIQIWSFGLEHAGEFVPDLCVAYLAKNFMLVKSDKYFGNVPYELLMWCVKHPHLTVHSEMDLVDGLLIWLDAGGRLSDLPESSQDNTINLMEQVRFSLLPLWFIAGRSKSHGFSKFADQSIELVTKLMKMPSTCLVDSLTDGPPTDVRVRLTEYSEILDLSGCPQLNEASLLLSILPNSYFANLRWRKSLESFLKNPDDDERHQEQISHRTLPILSFESVKEIDISKCQRLDYKVVIKCFSKSFPSLRKLRAAYLLNIKVSTLLELLLNFRELTEVDLTVDVSPIIPVQASVFYSGQGHCLLSSITRLTLEGRSDICDMELRSISRVCESLCYLNIKGCALLSDACIASVIQRCKKLCSLIVCYTSFSENSILALCATISMTNEHMDINSVASNLQTLHMSKCEGISETSLLNLITHSQKMKSLCLRDTKVSDSVLCEFPGSTLEALDISNTTISWMALARVISRNPNLKTLKARGCKNLLQLEVDGRTDNFSPLVSGQEVFKCLSKGSGLEELEIGWGFSYFSFESLRPAASFLRVISVGLGASLGEDVLKLLPSTCPLLESIVLHFQEISDSALTSVLTSLKHLQELALSYCFGEISLQSFKFSMPNLRKLRLERVTRWMTNDDLLVLTQSCPNLTELSLVGCLHLTSDCQPIISAGWPGMISLHLEECGSITENGVASLYGCIALEDLFLRHNGSGIQKSFLLDATLKFPMLRLVSLDMCDAKEGGFDVPEEKEEGRSLSIVKISRCKSDRCSLGRRAAPMHRETLVMLWNGQTLTKTLLKQRL.

A BTB domain is found at 41-109 (WDMSEILSYG…LYGYDIEITS (69 aa)). Positions 155–258 (IQIWSFGLEH…FSLLPLWFIA (104 aa)) constitute a BACK domain.

It participates in protein modification; protein ubiquitination. Functionally, may act as a substrate-specific adapter of an E3 ubiquitin-protein ligase complex (CUL3-RBX1-BTB) which mediates the ubiquitination and subsequent proteasomal degradation of target proteins. The protein is BTB/POZ domain-containing protein FBL11 (FBL11) of Arabidopsis thaliana (Mouse-ear cress).